The sequence spans 316 residues: 4-hydroxy-3-methylbut-2-enyl diphosphate reductase (316 aa).

C17 lines the [4Fe-4S] cluster pocket. H46 and H79 together coordinate (2E)-4-hydroxy-3-methylbut-2-enyl diphosphate. Dimethylallyl diphosphate-binding residues include H46 and H79. Isopentenyl diphosphate is bound by residues H46 and H79. Residue C101 coordinates [4Fe-4S] cluster. H129 lines the (2E)-4-hydroxy-3-methylbut-2-enyl diphosphate pocket. Residue H129 participates in dimethylallyl diphosphate binding. H129 contacts isopentenyl diphosphate. Catalysis depends on E131, which acts as the Proton donor. Residue T170 participates in (2E)-4-hydroxy-3-methylbut-2-enyl diphosphate binding. C200 is a [4Fe-4S] cluster binding site. The (2E)-4-hydroxy-3-methylbut-2-enyl diphosphate site is built by S228, S229, N230, and S273. Residues S228, S229, N230, and S273 each coordinate dimethylallyl diphosphate. S228, S229, N230, and S273 together coordinate isopentenyl diphosphate.

This sequence belongs to the IspH family. It depends on [4Fe-4S] cluster as a cofactor.

The enzyme catalyses isopentenyl diphosphate + 2 oxidized [2Fe-2S]-[ferredoxin] + H2O = (2E)-4-hydroxy-3-methylbut-2-enyl diphosphate + 2 reduced [2Fe-2S]-[ferredoxin] + 2 H(+). It carries out the reaction dimethylallyl diphosphate + 2 oxidized [2Fe-2S]-[ferredoxin] + H2O = (2E)-4-hydroxy-3-methylbut-2-enyl diphosphate + 2 reduced [2Fe-2S]-[ferredoxin] + 2 H(+). It participates in isoprenoid biosynthesis; dimethylallyl diphosphate biosynthesis; dimethylallyl diphosphate from (2E)-4-hydroxy-3-methylbutenyl diphosphate: step 1/1. Its pathway is isoprenoid biosynthesis; isopentenyl diphosphate biosynthesis via DXP pathway; isopentenyl diphosphate from 1-deoxy-D-xylulose 5-phosphate: step 6/6. Catalyzes the conversion of 1-hydroxy-2-methyl-2-(E)-butenyl 4-diphosphate (HMBPP) into a mixture of isopentenyl diphosphate (IPP) and dimethylallyl diphosphate (DMAPP). Acts in the terminal step of the DOXP/MEP pathway for isoprenoid precursor biosynthesis. This chain is 4-hydroxy-3-methylbut-2-enyl diphosphate reductase, found in Ruegeria pomeroyi (strain ATCC 700808 / DSM 15171 / DSS-3) (Silicibacter pomeroyi).